Consider the following 162-residue polypeptide: SsrA-binding protein (162 aa).

A compositionally biased stretch (basic and acidic residues) spans 137 to 154; sequence HDKREDTKAREWDREKAR. The interval 137–162 is disordered; it reads HDKREDTKAREWDREKARIMKNKHRG.

Belongs to the SmpB family.

It localises to the cytoplasm. Functionally, required for rescue of stalled ribosomes mediated by trans-translation. Binds to transfer-messenger RNA (tmRNA), required for stable association of tmRNA with ribosomes. tmRNA and SmpB together mimic tRNA shape, replacing the anticodon stem-loop with SmpB. tmRNA is encoded by the ssrA gene; the 2 termini fold to resemble tRNA(Ala) and it encodes a 'tag peptide', a short internal open reading frame. During trans-translation Ala-aminoacylated tmRNA acts like a tRNA, entering the A-site of stalled ribosomes, displacing the stalled mRNA. The ribosome then switches to translate the ORF on the tmRNA; the nascent peptide is terminated with the 'tag peptide' encoded by the tmRNA and targeted for degradation. The ribosome is freed to recommence translation, which seems to be the essential function of trans-translation. This Aeromonas salmonicida (strain A449) protein is SsrA-binding protein.